The primary structure comprises 286 residues: ATP synthase gamma chain (286 aa).

The protein belongs to the ATPase gamma chain family. As to quaternary structure, F-type ATPases have 2 components, CF(1) - the catalytic core - and CF(0) - the membrane proton channel. CF(1) has five subunits: alpha(3), beta(3), gamma(1), delta(1), epsilon(1). CF(0) has three main subunits: a, b and c.

It localises to the cell inner membrane. Functionally, produces ATP from ADP in the presence of a proton gradient across the membrane. The gamma chain is believed to be important in regulating ATPase activity and the flow of protons through the CF(0) complex. The sequence is that of ATP synthase gamma chain from Shewanella denitrificans (strain OS217 / ATCC BAA-1090 / DSM 15013).